Reading from the N-terminus, the 252-residue chain is Chitooligosaccharide deacetylase (252 aa).

Mg(2+) is bound by residues H61 and H125.

The protein belongs to the YdjC deacetylase family. ChbG subfamily. In terms of assembly, homodimer. Requires Mg(2+) as cofactor.

The protein localises to the cytoplasm. The catalysed reaction is N,N'-diacetylchitobiose + H2O = N-acetyl-beta-D-glucosaminyl-(1-&gt;4)-D-glucosamine + acetate. It catalyses the reaction diacetylchitobiose-6'-phosphate + H2O = N'-monoacetylchitobiose-6'-phosphate + acetate. Its pathway is glycan degradation; chitin degradation. Its function is as follows. Involved in the degradation of chitin. ChbG is essential for growth on the acetylated chitooligosaccharides chitobiose and chitotriose but is dispensable for growth on cellobiose and chitosan dimer, the deacetylated form of chitobiose. Deacetylation of chitobiose-6-P and chitotriose-6-P is necessary for both the activation of the chb promoter by the regulatory protein ChbR and the hydrolysis of phosphorylated beta-glucosides by the phospho-beta-glucosidase ChbF. Catalyzes the removal of only one acetyl group from chitobiose-6-P to yield monoacetylchitobiose-6-P, the inducer of ChbR and the substrate of ChbF. This is Chitooligosaccharide deacetylase from Salmonella typhi.